A 60-amino-acid chain; its full sequence is Beta-defensin 11 (60 aa).

An N-terminal signal peptide occupies residues 1 to 22; it reads MRLHHLLLALLFLVLSAGSGIS. 3 disulfide bridges follow: C27–C56, C34–C49, and C39–C57.

This sequence belongs to the beta-defensin family. Neutrophilic granules.

It is found in the secreted. Its function is as follows. Has bactericidal activity. Active against E.coli ML35 and S.aureus 502A. This chain is Beta-defensin 11 (DEFB11), found in Bos taurus (Bovine).